The chain runs to 716 residues: Polyribonucleotide nucleotidyltransferase (716 aa).

Mg(2+) contacts are provided by aspartate 480 and aspartate 486. One can recognise a KH domain in the interval proline 547–isoleucine 606. One can recognise an S1 motif domain in the interval glycine 616 to valine 711.

This sequence belongs to the polyribonucleotide nucleotidyltransferase family. Mg(2+) serves as cofactor.

Its subcellular location is the cytoplasm. It carries out the reaction RNA(n+1) + phosphate = RNA(n) + a ribonucleoside 5'-diphosphate. Functionally, involved in mRNA degradation. Catalyzes the phosphorolysis of single-stranded polyribonucleotides processively in the 3'- to 5'-direction. The sequence is that of Polyribonucleotide nucleotidyltransferase from Borreliella burgdorferi (strain ATCC 35210 / DSM 4680 / CIP 102532 / B31) (Borrelia burgdorferi).